The primary structure comprises 106 residues: uncharacterized protein (106 aa).

The interval 54-106 (RSTLVATSPRRRSLVQQRRPPLREQNGGSGSSCVSSGGSASTVKTPGSRRASK) is disordered. Low complexity predominate over residues 84–94 (SSCVSSGGSAS).

This is an uncharacterized protein from Human adenovirus C serotype 2 (HAdV-2).